Consider the following 583-residue polypeptide: Glycine--tRNA ligase (583 aa).

The substrate site is built by Arg100 and Glu166. ATP is bound by residues 198-200, 208-213, 328-329, and 443-446; these read RNE, VRLREF, EV, and GTDR. 213–217 is a substrate binding site; sequence FTIME. 439–443 lines the substrate pocket; it reads EPSFG.

This sequence belongs to the class-II aminoacyl-tRNA synthetase family.

It localises to the cytoplasm. The enzyme catalyses tRNA(Gly) + glycine + ATP = glycyl-tRNA(Gly) + AMP + diphosphate. Catalyzes the attachment of glycine to tRNA(Gly). The sequence is that of Glycine--tRNA ligase from Aeropyrum pernix (strain ATCC 700893 / DSM 11879 / JCM 9820 / NBRC 100138 / K1).